We begin with the raw amino-acid sequence, 86 residues long: Small ribosomal subunit protein bS18 (86 aa).

It belongs to the bacterial ribosomal protein bS18 family. As to quaternary structure, part of the 30S ribosomal subunit. Forms a tight heterodimer with protein bS6.

Functionally, binds as a heterodimer with protein bS6 to the central domain of the 16S rRNA, where it helps stabilize the platform of the 30S subunit. The chain is Small ribosomal subunit protein bS18 from Campylobacter curvus (strain 525.92).